The chain runs to 453 residues: Proton extrusion protein PxcA (453 aa).

Residues 147 to 189 are disordered; it reads SQDKETQTLDNKSTNQTNSKLSNNNKISSGQNDSRLESASQKT. The segment covering 154 to 163 has biased composition (polar residues); sequence TLDNKSTNQT. Low complexity predominate over residues 164 to 175; that stretch reads NSKLSNNNKISS. Residues 176–189 show a composition bias toward polar residues; that stretch reads GQNDSRLESASQKT. The next 4 membrane-spanning stretches (helical) occupy residues 235-255, 330-350, 377-397, and 413-433; these read FILL…TFLL, SIGN…VIVS, LIIL…WEVI, and FNFL…KYWI.

The protein belongs to the CemA family.

It localises to the cell inner membrane. In terms of biological role, required for H(+) efflux immediately after light irradiation to form a rapid H(+) concentration gradient across the thylakoid membranes. Together with PxcL, contributes to transient H(+) uptake following dark to light transition. The chain is Proton extrusion protein PxcA from Crocosphaera subtropica (strain ATCC 51142 / BH68) (Cyanothece sp. (strain ATCC 51142)).